The sequence spans 120 residues: PE family protein PE10 (120 aa).

Residues 29-59 (GQVTGNGGSGNSGTSAAAANPNSDNTASIAD) form a disordered region. A compositionally biased stretch (low complexity) spans 40–51 (SGTSAAAANPNS).

This sequence belongs to the mycobacterial PE family. Forms a complex with PE9. The complex interacts with human TLR4.

The protein localises to the secreted. The protein resides in the cell wall. In terms of biological role, together with PE9, induces macrophage apoptosis through human Toll-like receptor 4 (TLR4) signaling pathway. Interaction with TLR4 leads to increased levels of phospho-IRF-3, increase in the transcript levels of IFN-beta and pro-apoptotic genes, up-regulation of IL-10, down-regulation of IL-1b and enhanced levels of macrophage apoptosis. This Mycobacterium tuberculosis (strain ATCC 25618 / H37Rv) protein is PE family protein PE10.